The chain runs to 345 residues: Phosphoribosylformylglycinamidine cyclo-ligase (345 aa).

Belongs to the AIR synthase family.

It is found in the cytoplasm. It catalyses the reaction 2-formamido-N(1)-(5-O-phospho-beta-D-ribosyl)acetamidine + ATP = 5-amino-1-(5-phospho-beta-D-ribosyl)imidazole + ADP + phosphate + H(+). Its pathway is purine metabolism; IMP biosynthesis via de novo pathway; 5-amino-1-(5-phospho-D-ribosyl)imidazole from N(2)-formyl-N(1)-(5-phospho-D-ribosyl)glycinamide: step 2/2. In Limosilactobacillus reuteri (strain DSM 20016) (Lactobacillus reuteri), this protein is Phosphoribosylformylglycinamidine cyclo-ligase.